A 316-amino-acid chain; its full sequence is Large ribosomal subunit protein uL4 (316 aa).

The segment at 1–211 (MASCVVKNWQ…EQLKARWGSD (211 aa)) is large ribosomal subunit protein uL4. Disordered stretches follow at residues 44–76 (ARQGNAHTKTRAEVRGGGRKPWKQKGTGRARAG) and 231–316 (EDQA…ESDD). Residues 60–71 (GGRKPWKQKGTG) are compositionally biased toward basic residues. The tract at residues 212–316 (AAPAVLETPS…TAPAEEESDD (105 aa)) is unknown. A compositionally biased stretch (low complexity) spans 255-270 (QTPAQPEAQENQAALQ). Acidic residues-rich tracts occupy residues 281–291 (EQTEEPQDPAE) and 301–316 (TVEEAETAPAEEESDD).

It belongs to the universal ribosomal protein uL4 family. Part of the 50S ribosomal subunit.

One of the primary rRNA binding proteins, this protein initially binds near the 5'-end of the 23S rRNA. It is important during the early stages of 50S assembly. It makes multiple contacts with different domains of the 23S rRNA in the assembled 50S subunit and ribosome. Functionally, forms part of the polypeptide exit tunnel. The protein is Large ribosomal subunit protein uL4 of Synechococcus sp. (strain JA-2-3B'a(2-13)) (Cyanobacteria bacterium Yellowstone B-Prime).